Reading from the N-terminus, the 420-residue chain is MSGLPFHIPGYYYNSEKKRYFRIISSGQSTPSSNIYTKERLKRGKRFNNISKERTKGKGGNPVFNFSTYLFDRQFSQYPYSCNDDRDYLCAKNLKKINLRQLPVGTELQKIGWLREVNTIILTSKNGDILGCCLTPEDKSGVANEKYTSEGSIQDFSLSRIGLSNNPISSLVCNAMQIFWSTSPSLQNEGQFHISTYNQLLGESNNYRWGSLKLLKTPLCAESIGEMGFAVGGTSKIAIINREGKLTQSLQSKGDVFSLKYLGDNLVIAGCRNKSVLVYDLRTKKECVQRFYHGSSICSMQNLDFSQPKLLVSGLESKISLYDCRFLQSKKRPQSIMSYMGHSNLLERNLALMKNENGSIFSSAGDDYVLRFWKTDCSLPFKEMRVDDGKYLCRDGSWVKAMNGTGWVLPYGRGLLIYEP.

The short motif at Arg73 to Phe75 is the DDB-boX element. WD repeat units lie at residues Gln251–Gln289, His293–Arg332, and Gly341–Glu383.

Its subcellular location is the cytoplasm. The protein localises to the nucleus. This chain is WD repeat-containing protein 21 (wdr21), found in Schizosaccharomyces pombe (strain 972 / ATCC 24843) (Fission yeast).